An 874-amino-acid polypeptide reads, in one-letter code: Alanine--tRNA ligase (874 aa).

His564, His568, Cys666, and His670 together coordinate Zn(2+).

This sequence belongs to the class-II aminoacyl-tRNA synthetase family. Requires Zn(2+) as cofactor.

It localises to the cytoplasm. It carries out the reaction tRNA(Ala) + L-alanine + ATP = L-alanyl-tRNA(Ala) + AMP + diphosphate. Functionally, catalyzes the attachment of alanine to tRNA(Ala) in a two-step reaction: alanine is first activated by ATP to form Ala-AMP and then transferred to the acceptor end of tRNA(Ala). Also edits incorrectly charged Ser-tRNA(Ala) and Gly-tRNA(Ala) via its editing domain. This Carboxydothermus hydrogenoformans (strain ATCC BAA-161 / DSM 6008 / Z-2901) protein is Alanine--tRNA ligase.